Consider the following 62-residue polypeptide: Sec-independent protein translocase protein TatA (62 aa).

Residues 10–32 (LLIILIIVIAIFGAGKLAGLGGA) traverse the membrane as a helical segment.

It belongs to the TatA/E family. As to quaternary structure, forms a complex with TatC.

Its subcellular location is the cell membrane. In terms of biological role, part of the twin-arginine translocation (Tat) system that transports large folded proteins containing a characteristic twin-arginine motif in their signal peptide across membranes. TatA could form the protein-conducting channel of the Tat system. The protein is Sec-independent protein translocase protein TatA of Chloroflexus aurantiacus (strain ATCC 29366 / DSM 635 / J-10-fl).